The chain runs to 243 residues: Large ribosomal subunit protein uL2 (243 aa).

Disordered stretches follow at residues 1 to 23 (MGKR…PSHR) and 204 to 243 (PFGG…GGRR). Residues 228 to 243 (KVGHIAARKTGRGGRR) show a composition bias toward basic residues.

It belongs to the universal ribosomal protein uL2 family. As to quaternary structure, part of the 50S ribosomal subunit. Forms a bridge to the 30S subunit in the 70S ribosome.

Functionally, one of the primary rRNA binding proteins. Required for association of the 30S and 50S subunits to form the 70S ribosome, for tRNA binding and peptide bond formation. It has been suggested to have peptidyltransferase activity; this is somewhat controversial. Makes several contacts with the 16S rRNA in the 70S ribosome. This is Large ribosomal subunit protein uL2 from Methanopyrus kandleri (strain AV19 / DSM 6324 / JCM 9639 / NBRC 100938).